We begin with the raw amino-acid sequence, 294 residues long: MEGVIVPLVTPFREDYSIDFEALEWHIRFLEEKGVHGIFVNSTTGEFTSLNTDERKMLAEKGREITSGMYLVGTGSTSTLEVIELSRHAEDIGADGIVIVAPYYCKLKDEEILKHFSMVAERVDIPIIVYAIPSCANPVPVDIIRKVSLEYSNIIGVKASVDSLTYLQELIEVKEERKDFRVFTGLDQYFLSTLLLGGDGGIMACANFAPEIHLQIWNSFKRRNFEEAIKLSRVLGEISRIYNVASSFASAVKLAMIAKGFPIKPVLRPPHVIDGEEVFNEIKGILRSLENVKP.

Active-site charge relay system residues include Thr43 and Tyr104. Tyr130 serves as the catalytic Proton donor. Lys158 (schiff-base intermediate with substrate) is an active-site residue.

The protein belongs to the DapA family. Homotetramer.

Its subcellular location is the cytoplasm. This is an uncharacterized protein from Pyrococcus abyssi (strain GE5 / Orsay).